Here is a 324-residue protein sequence, read N- to C-terminus: Dehydrogenase/reductase SDR family member 7C-A (324 aa).

The N-terminal stretch at 1 to 17 (MAVPSVMVLPLLIVVFA) is a signal peptide. 41 to 65 (VITDAVSGMGSECARLFHAGGARLV) provides a ligand contact to NAD(+). Serine 178 contributes to the substrate binding site. Catalysis depends on tyrosine 191, which acts as the Proton acceptor.

Belongs to the short-chain dehydrogenases/reductases (SDR) family.

The protein localises to the secreted. In terms of biological role, putative oxidoreductase. This is Dehydrogenase/reductase SDR family member 7C-A (dhrs7ca) from Danio rerio (Zebrafish).